A 437-amino-acid polypeptide reads, in one-letter code: Sorting nexin-30 (437 aa).

Disordered regions lie at residues methionine 1 to leucine 44 and leucine 54 to serine 73. The residue at position 38 (threonine 38) is a Phosphothreonine. Phosphoserine is present on serine 40. Over residues alanine 63 to serine 73 the composition is skewed to low complexity. The PX domain occupies arginine 89 to alanine 210. Positions 132, 134, 162, and 176 each coordinate a 1,2-diacyl-sn-glycero-3-phospho-(1D-myo-inositol-3-phosphate). Residues lysine 234–lysine 437 enclose the BAR domain.

Belongs to the sorting nexin family. Heterodimer; heterodimerizes with SNX4.

The protein localises to the early endosome membrane. Involved in the regulation of endocytosis and in several stages of intracellular trafficking. Together with SNX4, involved in autophagosome assembly. The polypeptide is Sorting nexin-30 (Homo sapiens (Human)).